Consider the following 201-residue polypeptide: Pectinesterase inhibitor 7 (201 aa).

Positions 1-24 (MARNFELSLILFVLYLSTAAIVMA) are cleaved as a signal peptide. Intrachain disulfides connect Cys-42–Cys-51 and Cys-108–Cys-159.

The protein belongs to the PMEI family. In terms of assembly, binds reversibly to PME3 to inhibit its activity; the stability of the PME3-PMEI7 complex and the inhibition of the pectin methylesterase (PME) activity is pH-dependent, based on protonation status of amino-acids at the complex interface. In terms of tissue distribution, accumulates in etiolated hypocotyls (at protein level).

It localises to the secreted. Its subcellular location is the extracellular space. The protein localises to the apoplast. It is found in the cell wall. Its function is as follows. Pectin methylesterase (PME) inhibitor that can target PME3 in a pH-dependent manner, mainly in slightly acidic conditions (pH 6.0 and 5.0) but not at pH 7.0; this processus relies on changes in the protonation of amino acids involved in intermolecular and intramolecular interactions. Regulates homogalacturonan methylesterification during plant development. This Arabidopsis thaliana (Mouse-ear cress) protein is Pectinesterase inhibitor 7.